The following is a 902-amino-acid chain: Chloride channel protein 2 (902 aa).

The Cytoplasmic portion of the chain corresponds to 1 to 89; sequence MAASAAAAGE…RCHKFLVSRV (89 aa). The interval 18–36 is essential for channel gating by both voltage and cell volume; the sequence is QYEQTLMYGRYTQELGAFA. Phosphothreonine is present on Thr-22. The interval 38–51 is modulates channel gating by both voltage and cell volume; sequence EEAARIRLGGPEPW. The next 2 membrane-spanning stretches (helical) occupy residues 90 to 123 and 132 to 157; these read GEDW…AQQW and ILLQ…TQIL. The Selectivity filter part_1 signature appears at 163 to 167; it reads GSGIP. An intramembrane region (helical) is located at residues 166–173; that stretch reads IPEMKTIL. 2 helical membrane-spanning segments follow: residues 182-200 and 207-225; these read LTLK…ALGS and EGPF…SKFL. A Selectivity filter part_2 motif is present at residues 205-209; sequence GKEGP. 2 intramembrane regions (helical) span residues 241–253 and 257–265; these read MLAA…VGCC and PIGGVLFSI. 5 helical membrane-spanning segments follow: residues 277–297, 323–351, 360–379, 431–451, and 459–482; these read YWRG…LAVW, LPAF…VQVM, FLMR…ISTL, ANVF…SALA, and GAFM…MAAW. The short motif at 459 to 463 is the Selectivity filter part_3 element; the sequence is GAFMP. The helical intramembrane region spans 499–513; sequence GGYAVVGAAALAGAV. The note=Loop between two helices intramembrane region spans 514–515; that stretch reads TH. An intramembrane region (helical) is located at residues 516–527; it reads TVSTAVIVFELT. The segment at residues 528–532 is an intramembrane region (note=Loop between two helices); it reads GQIAH. The chain crosses the membrane as a helical span at residues 533–550; sequence ILPVMIAVILANAVAQSL. Topologically, residues 551 to 902 are cytoplasmic; that stretch reads QPSLYDSIIR…SPSDSDDKCQ (352 aa). Positions 586-644 constitute a CBS 1 domain; that stretch reads MVRDVPYVALNCTFRDLRLALHRTKGRMLALVESSESMILLGSIERSQVVTLLGAQLSA. Residues 648–748 are disordered; it reads RQHIQERRKA…TSDLEKPESC (101 aa). 2 stretches are compositionally biased toward polar residues: residues 671 to 683 and 706 to 719; these read PESS…NTED and SNAS…TGSM. Residues 794–854 enclose the CBS 2 domain; it reads IDPAPFQLVE…GSVTAQGVKV (61 aa). The short motif at 816–817 is the Basolateral membrane sorting element; it reads LL. Residues 860–902 are disordered; sequence SFRDSATSSSDTETTEVHALWGPHSCHGLPRDGSPSDSDDKCQ.

Belongs to the chloride channel (TC 2.A.49) family. ClC-2/CLCN2 subfamily. As to quaternary structure, homodimer. Interacts with auxiliary subunit HEPACAM.

The protein resides in the cell membrane. Its subcellular location is the basolateral cell membrane. It localises to the cell projection. The protein localises to the dendritic spine membrane. It is found in the axon. It carries out the reaction chloride(in) = chloride(out). The enzyme catalyses thiocyanate(in) = thiocyanate(out). It catalyses the reaction bromide(in) = bromide(out). The catalysed reaction is nitrate(in) = nitrate(out). It carries out the reaction iodide(out) = iodide(in). Common gate kinetics are down-regulated by intracellular ATP. Inhibited by AK-42, a derivative of meclofenamate. Inhibited by Cd(2+). Inhibited by Zn(2+) and PKC activation. Inhibited at acidic pH. CCLN2:HEPACAM channel conductance is up-regulated upon hypo-osmolarity. Functionally, voltage-gated and osmosensitive chloride channel. Forms a homodimeric channel where each subunit has its own ion conduction pathway. Conducts double-barreled currents controlled by two types of gates, two fast glutamate gates that control each subunit independently and a slow common gate that opens and shuts off both subunits simultaneously. Displays inward rectification currents activated upon membrane hyperpolarization and extracellular hypotonicity. Contributes to chloride conductance involved in neuron excitability. In hippocampal neurons, generates a significant part of resting membrane conductance and provides an additional chloride efflux pathway to prevent chloride accumulation in dendrites upon GABA receptor activation. In glia, associates with the auxiliary subunit HEPACAM/GlialCAM at astrocytic processes and myelinated fiber tracts where it may regulate transcellular chloride flux buffering extracellular chloride and potassium concentrations. Regulates aldosterone production in adrenal glands. The opening of CLCN2 channels at hyperpolarized membrane potentials in the glomerulosa causes cell membrane depolarization, activation of voltage-gated calcium channels and increased expression of aldosterone synthase, the rate-limiting enzyme for aldosterone biosynthesis. Contributes to chloride conductance in retinal pigment epithelium involved in phagocytosis of shed photoreceptor outer segments and photoreceptor renewal. Conducts chloride currents at the basolateral membrane of epithelial cells with a role in chloride reabsorption rather than secretion. Permeable to small monovalent anions with chloride &gt; thiocyanate &gt; bromide &gt; nitrate &gt; iodide ion selectivity. This chain is Chloride channel protein 2 (CLCN2), found in Cavia porcellus (Guinea pig).